Consider the following 905-residue polypeptide: Protein LONGIFOLIA 2 (905 aa).

Disordered regions lie at residues 42–136, 232–268, 285–315, 432–585, 606–626, and 690–711; these read VSGG…GGLM, RLSLDSRSNSFRSPRADAARSSCPEEPATMTHRRSSS, DTEQRRENRFCDSPRPMSRVEPTALQRSRSV, STSP…SDSN, CDFPEQHTPKQRSPDFGIKQD, and VPFPQSNRGPMKPSSDHFECSP. Basic and acidic residues predominate over residues 65–74; that stretch reads ESDKETERSS. Low complexity predominate over residues 90–117; that stretch reads FESSSRPSFSSSPRSSSFSSAEVSTTAS. Residues 286 to 296 are compositionally biased toward basic and acidic residues; sequence TEQRRENRFCD. Polar residues-rich tracts occupy residues 432 to 461, 477 to 487, and 501 to 516; these read STSPLPQNVTLPNVKVGNSRQTRKVTSGKQ, LDSTKSNSPKT, and MTKSGRSQQHSVSPRT. A compositionally biased stretch (basic and acidic residues) spans 566–581; it reads PDDRLSDARSDLRSLR.

Interacts (via C-terminus) with TON1A and TON1B.

It localises to the cytoplasm. Its subcellular location is the cytoskeleton. Functionally, in association with LNG1, regulates leaf morphology by promoting longitudinal polar cell elongation independently of ROT3. Associates with microtubules and recruits TON1A and TON1B to the cytoskeleton through its C-terminus. The polypeptide is Protein LONGIFOLIA 2 (LNG2) (Arabidopsis thaliana (Mouse-ear cress)).